Here is a 539-residue protein sequence, read N- to C-terminus: Glucans biosynthesis protein D (539 aa).

The segment at residues M1–A31 is a signal peptide (tat-type signal).

It belongs to the OpgD/OpgG family. In terms of processing, predicted to be exported by the Tat system. The position of the signal peptide cleavage has not been experimentally proven.

It localises to the periplasm. Its pathway is glycan metabolism; osmoregulated periplasmic glucan (OPG) biosynthesis. Its function is as follows. Probably involved in the control of the structural glucose backbone of osmoregulated periplasmic glucans (OPGs). In Pseudomonas fluorescens (strain ATCC BAA-477 / NRRL B-23932 / Pf-5), this protein is Glucans biosynthesis protein D.